A 584-amino-acid chain; its full sequence is A-type ATP synthase subunit A (584 aa).

233-240 (GPFGSGKT) contributes to the ATP binding site.

The protein belongs to the ATPase alpha/beta chains family. In terms of assembly, has multiple subunits with at least A(3), B(3), C, D, E, F, H, I and proteolipid K(x).

Its subcellular location is the cell membrane. It catalyses the reaction ATP + H2O + 4 H(+)(in) = ADP + phosphate + 5 H(+)(out). Component of the A-type ATP synthase that produces ATP from ADP in the presence of a proton gradient across the membrane. The A chain is the catalytic subunit. The polypeptide is A-type ATP synthase subunit A (Methanobrevibacter smithii (strain ATCC 35061 / DSM 861 / OCM 144 / PS)).